A 333-amino-acid chain; its full sequence is Fatty acid hydroxylase domain-containing protein 2 (333 aa).

The next 6 helical transmembrane spans lie at 29–49 (FILG…TWHL), 77–97 (ILFF…FNGL), 134–154 (TVLF…YPFL), 168–188 (FHWF…LFYY), 215–235 (VISL…PAIV), and 237–257 (PLVM…ALII). The Fatty acid hydroxylase domain maps to 176 to 299 (AIFTLIEEVL…LGVLDHLHGT (124 aa)).

Belongs to the sterol desaturase family.

The protein localises to the cytoplasm. It localises to the membrane. Promotes megakaryocyte differentiation by enhancing ERK phosphorylation and up-regulating RUNX1 expression. This Macaca fascicularis (Crab-eating macaque) protein is Fatty acid hydroxylase domain-containing protein 2 (FAXDC2).